The following is a 521-amino-acid chain: Replicase polyprotein 1ab (521 aa).

One can recognise an AV-Nsp11N/CoV-Nsp15M domain in the interval 1–58 (GGGGQSFLAADNAVLVSTQCYKRHSYVEIPSNLLVQNGMSLKDGANLYVYKRVNGAFV). The 142-residue stretch at 75-216 (EPRSDVERDF…EDGSIKTCYP (142 aa)) folds into the NendoU domain. Active-site residues include His104, His119, Lys159, Lys263, Asp347, Lys391, and Glu424. In terms of domain architecture, Nidovirus-type SAM-dependent 2'-O-MTase spans 219–518 (QSAWTCGYNM…NTSFTSDSFV (300 aa)).

Its function is as follows. The replicase polyprotein of coronaviruses is a multifunctional protein: it contains the activities necessary for the transcription of negative stranded RNA, leader RNA, subgenomic mRNAs and progeny virion RNA as well as proteinases responsible for the cleavage of the polyprotein into functional products. NendoU is a Mn(2+)-dependent, uridylate-specific enzyme, which leaves 2'-3'-cyclic phosphates 5' to the cleaved bond. In Gallus gallus (Chicken), this protein is Replicase polyprotein 1ab (rep).